The following is a 141-amino-acid chain: MAKELTLSIIKPDAVAKSVIGEIYTRFEKAGLDIVAAKMTQLSREQAESFYDIHRARPFFKDLVDFMISGPVMIQVLKGENAVAKNREIMGATNPKEAAPGTIRADFADSIDANAVHGSDSLENAAREIAFFFEPHELCNR.

Lys-11, Phe-59, Arg-87, Thr-93, Arg-104, and Asn-114 together coordinate ATP. His-117 functions as the Pros-phosphohistidine intermediate in the catalytic mechanism.

It belongs to the NDK family. As to quaternary structure, homotetramer. Mg(2+) is required as a cofactor.

It localises to the cytoplasm. The enzyme catalyses a 2'-deoxyribonucleoside 5'-diphosphate + ATP = a 2'-deoxyribonucleoside 5'-triphosphate + ADP. It catalyses the reaction a ribonucleoside 5'-diphosphate + ATP = a ribonucleoside 5'-triphosphate + ADP. Its function is as follows. Major role in the synthesis of nucleoside triphosphates other than ATP. The ATP gamma phosphate is transferred to the NDP beta phosphate via a ping-pong mechanism, using a phosphorylated active-site intermediate. The polypeptide is Nucleoside diphosphate kinase (Legionella pneumophila (strain Lens)).